A 383-amino-acid polypeptide reads, in one-letter code: Acetylornithine deacetylase (383 aa).

Residue H80 participates in Zn(2+) binding. Residue D82 is part of the active site. D112 is a binding site for Zn(2+). E144 is a catalytic residue. Zn(2+)-binding residues include E145, E169, and H355.

Belongs to the peptidase M20A family. ArgE subfamily. In terms of assembly, homodimer. Zn(2+) is required as a cofactor. Requires Co(2+) as cofactor. It depends on glutathione as a cofactor.

It localises to the cytoplasm. It carries out the reaction N(2)-acetyl-L-ornithine + H2O = L-ornithine + acetate. The protein operates within amino-acid biosynthesis; L-arginine biosynthesis; L-ornithine from N(2)-acetyl-L-ornithine (linear): step 1/1. Catalyzes the hydrolysis of the amide bond of N(2)-acetylated L-amino acids. Cleaves the acetyl group from N-acetyl-L-ornithine to form L-ornithine, an intermediate in L-arginine biosynthesis pathway, and a branchpoint in the synthesis of polyamines. In Shigella flexneri, this protein is Acetylornithine deacetylase.